Reading from the N-terminus, the 818-residue chain is Serine/threonine-protein phosphatase 4 regulatory subunit 3 (818 aa).

Residues 1–100 (MTDTRRRVKV…DEIWEKICQV (100 aa)) form the WH1 domain. A disordered region spans residues 718-818 (LAKSSFSGRQ…PPSKKSRLSS (101 aa)). Residues 721–730 (SSFSGRQNPS) are compositionally biased toward polar residues. The segment covering 736–756 (SGSTKTSLSSPPPSASLSPGS) has biased composition (low complexity). The segment covering 788 to 804 (YPDDDEEEEDDDDEESK) has biased composition (acidic residues).

This sequence belongs to the SMEK family. In terms of assembly, serine/threonine-protein phosphatase 4 (PP4) occurs in different assemblies of the catalytic and one or more regulatory subunits.

Its function is as follows. Regulatory subunit of serine/threonine-protein phosphatase 4. In Tetraodon nigroviridis (Spotted green pufferfish), this protein is Serine/threonine-protein phosphatase 4 regulatory subunit 3 (smek1).